Consider the following 321-residue polypeptide: MTKYALVGDVGGTNARLALCDIASGEISQAKTYSGLDYPSLEAVVRVYLDEHGVSVEDGCIAIACPITGDWVAMTNHTWAFSIAEMKKNLGFSHLEIINDFTAVSMAIPMLKKEHLIQFGGGEPVDGKPIAVYGAGTGLGVAHLVHVDKRWISLPGEGGHVDFAPNSEEEAMILEILRAEIGHVSAERVLSGPGLVNLYRAIVKSDNRLPENLRPKDITERALADSCIDCRRALSLFCVIMGRFGGDLALTMGTFGGVYIAGGIVPRFLEFFKASGFRGGFEDKGRFKDYVHGIPVYLIVHDNPGLLGSGAHLRQTLGHIL.

8-13 (GDVGGT) contacts ATP.

This sequence belongs to the bacterial glucokinase family.

The protein resides in the cytoplasm. The enzyme catalyses D-glucose + ATP = D-glucose 6-phosphate + ADP + H(+). The polypeptide is Glucokinase (Salmonella typhi).